The chain runs to 103 residues: Large ribosomal subunit protein bL21 (103 aa).

Belongs to the bacterial ribosomal protein bL21 family. As to quaternary structure, part of the 50S ribosomal subunit. Contacts protein L20.

In terms of biological role, this protein binds to 23S rRNA in the presence of protein L20. This chain is Large ribosomal subunit protein bL21, found in Pseudomonas syringae pv. syringae (strain B728a).